The following is a 396-amino-acid chain: MTKTLHFDCLSGISGDMTLGALIDLGVSVDQIQQGLHSLNLPDLKLRTEEVKKCGFRAVQIHIDHPPEKAHRHLHHIDAMIDEATEINDSAKALAKKIFLCVGEAEAKVHGCSLRKVHFHEVGAIDSIADIVGVAIAIDALDVQHATSSTIPTGTGAITIDHGRVAVPAPATAEILTGVPLMACDIESELTTPTGAAIIKTLARSFGPPPAMTPLRVGYGSGTRDLEGQANVLRVTLGELTEASSSQGQIETDRVTLLESNIDDATAEQLANVSELLMSAGALDVWQTPIVMKKGRLATTVSVLCDASRIGALQTLLFTQTSTIGLRRTEMNRSKLARESQTVETPDGPAKGKTVRLPDGTLRFSLENDEVKRLCAATGKSADQIRTEAQAAFAAG.

The disordered stretch occupies residues 333–355 (RSKLARESQTVETPDGPAKGKTV).

It belongs to the LarC family.

This chain is Putative nickel insertion protein, found in Rhodopirellula baltica (strain DSM 10527 / NCIMB 13988 / SH1).